The sequence spans 129 residues: Small ribosomal subunit protein uS11 (129 aa).

The protein belongs to the universal ribosomal protein uS11 family. As to quaternary structure, part of the 30S ribosomal subunit. Interacts with proteins S7 and S18. Binds to IF-3.

In terms of biological role, located on the platform of the 30S subunit, it bridges several disparate RNA helices of the 16S rRNA. Forms part of the Shine-Dalgarno cleft in the 70S ribosome. The protein is Small ribosomal subunit protein uS11 of Francisella tularensis subsp. mediasiatica (strain FSC147).